The sequence spans 669 residues: Zinc finger CCCH domain-containing protein 17 (669 aa).

Residues 1 to 11 show a composition bias toward low complexity; that stretch reads MFAPATQPQQQ. The segment at 1 to 23 is disordered; the sequence is MFAPATQPQQQHEQKKQSETVSS. 3 C3H1-type zinc fingers span residues 34–58, 60–86, and 114–141; these read DCVY…HSEY, RMNP…HPPL, and AKQP…HTPN. 4 disordered regions span residues 150–175, 285–306, 376–589, and 642–669; these read PVEA…EKKL, VEDR…PDFS, GMRL…VMEE, and EEGE…EMLS. Composition is skewed to basic and acidic residues over residues 164–175, 285–299, 392–406, 420–464, 478–499, and 547–579; these read KPIENNTEEKKL, VEDR…RGNS, SMDR…DTPR, KLRE…EENH, RRRE…ESKP, and NNKD…PKAE. 2 stretches are compositionally biased toward acidic residues: residues 580 to 589 and 642 to 659; these read VEEEGTVMEE and EEGE…GEED. Residues 660–669 show a composition bias toward basic and acidic residues; that stretch reads IEKKTVEMLS.

The protein is Zinc finger CCCH domain-containing protein 17 of Arabidopsis thaliana (Mouse-ear cress).